Reading from the N-terminus, the 342-residue chain is UDP-3-O-acylglucosamine N-acyltransferase (342 aa).

His-242 (proton acceptor) is an active-site residue.

Belongs to the transferase hexapeptide repeat family. LpxD subfamily. In terms of assembly, homotrimer.

It catalyses the reaction a UDP-3-O-[(3R)-3-hydroxyacyl]-alpha-D-glucosamine + a (3R)-hydroxyacyl-[ACP] = a UDP-2-N,3-O-bis[(3R)-3-hydroxyacyl]-alpha-D-glucosamine + holo-[ACP] + H(+). It functions in the pathway bacterial outer membrane biogenesis; LPS lipid A biosynthesis. Functionally, catalyzes the N-acylation of UDP-3-O-acylglucosamine using 3-hydroxyacyl-ACP as the acyl donor. Is involved in the biosynthesis of lipid A, a phosphorylated glycolipid that anchors the lipopolysaccharide to the outer membrane of the cell. This chain is UDP-3-O-acylglucosamine N-acyltransferase, found in Leptothrix cholodnii (strain ATCC 51168 / LMG 8142 / SP-6) (Leptothrix discophora (strain SP-6)).